Reading from the N-terminus, the 115-residue chain is Dolichyl-diphosphooligosaccharide--protein glycosyltransferase subunit DAD1 (115 aa).

The Cytoplasmic segment spans residues 1 to 31 (MARSTSKDAQALIQSLRSAYAATPSNLKIID). A helical membrane pass occupies residues 32 to 52 (LYVVFAVFTALIQVVYMAIVG). Topologically, residues 53-55 (SFP) are lumenal. A helical transmembrane segment spans residues 56 to 76 (FNAFLSGLLSCIGTAVLAVCL). The Cytoplasmic segment spans residues 77 to 94 (RIQVNKENKEFKDLAPER). A helical membrane pass occupies residues 95–115 (AFADFVLCNLVLHLVIMNFLG).

This sequence belongs to the DAD/OST2 family. In terms of assembly, component of the oligosaccharyltransferase (OST) complex.

The protein localises to the endoplasmic reticulum membrane. Its pathway is protein modification; protein glycosylation. In terms of biological role, subunit of the oligosaccharyl transferase (OST) complex that catalyzes the initial transfer of a defined glycan (Glc(3)Man(9)GlcNAc(2) in eukaryotes) from the lipid carrier dolichol-pyrophosphate to an asparagine residue within an Asn-X-Ser/Thr consensus motif in nascent polypeptide chains, the first step in protein N-glycosylation. N-glycosylation occurs cotranslationally and the complex associates with the Sec61 complex at the channel-forming translocon complex that mediates protein translocation across the endoplasmic reticulum (ER). All subunits are required for a maximal enzyme activity. In Betula pendula (European white birch), this protein is Dolichyl-diphosphooligosaccharide--protein glycosyltransferase subunit DAD1 (DAD1).